A 791-amino-acid chain; its full sequence is Lon protease (791 aa).

A Lon N-terminal domain is found at 28 to 223; it reads LPVVVISEIM…YILQDIQSLL (196 aa). An ATP-binding site is contributed by 374–381; sequence GPPGVGKT. Positions 610–791 constitute a Lon proteolytic domain; that stretch reads KEKIGSTNGL…SDVFSQVFVV (182 aa). Active-site residues include Ser-697 and Lys-740.

The protein belongs to the peptidase S16 family. As to quaternary structure, homohexamer. Organized in a ring with a central cavity.

It localises to the cytoplasm. The catalysed reaction is Hydrolysis of proteins in presence of ATP.. Its function is as follows. ATP-dependent serine protease that mediates the selective degradation of mutant and abnormal proteins as well as certain short-lived regulatory proteins. Required for cellular homeostasis and for survival from DNA damage and developmental changes induced by stress. Degrades polypeptides processively to yield small peptide fragments that are 5 to 10 amino acids long. Binds to DNA in a double-stranded, site-specific manner. The polypeptide is Lon protease (Aster yellows witches'-broom phytoplasma (strain AYWB)).